A 211-amino-acid polypeptide reads, in one-letter code: Endonuclease V (211 aa).

Positions 37 and 102 each coordinate Mg(2+).

This sequence belongs to the endonuclease V family. Mg(2+) is required as a cofactor.

It is found in the cytoplasm. It catalyses the reaction Endonucleolytic cleavage at apurinic or apyrimidinic sites to products with a 5'-phosphate.. Functionally, DNA repair enzyme involved in the repair of deaminated bases. Selectively cleaves double-stranded DNA at the second phosphodiester bond 3' to a deoxyinosine leaving behind the intact lesion on the nicked DNA. This Ignicoccus hospitalis (strain KIN4/I / DSM 18386 / JCM 14125) protein is Endonuclease V.